The chain runs to 123 residues: MVENSELRKAGLKVTLPRVKILQMLDSAEQRHMSAEDVYKALMESNEDVGLATVYRVLTQFEAAGLVVRHNFDGGHAVFELADGGHHDHMVDLDTNEVIEFTSPEIEALQHKIAEEHGFDLVD.

Positions 1–83 (MVENSELRKA…GGHAVFELAD (83 aa)) are DNA-binding. Zn(2+) is bound by residues H32 and E80. Residues 84–123 (GGHHDHMVDLDTNEVIEFTSPEIEALQHKIAEEHGFDLVD) are dimerization. Fe cation contacts are provided by H86 and D88. The Zn(2+) site is built by H89 and E100. Position 107 (E107) interacts with Fe cation.

It belongs to the Fur family. In terms of assembly, homodimer.

It is found in the cytoplasm. Acts as a global negative controlling element, employing Fe(2+) as a cofactor to bind the operator of the repressed genes. This is Ferric uptake regulation protein (fur) from Pseudomonas fluorescens.